A 118-amino-acid polypeptide reads, in one-letter code: Large ribosomal subunit protein bL20 (118 aa).

It belongs to the bacterial ribosomal protein bL20 family.

In terms of biological role, binds directly to 23S ribosomal RNA and is necessary for the in vitro assembly process of the 50S ribosomal subunit. It is not involved in the protein synthesizing functions of that subunit. The polypeptide is Large ribosomal subunit protein bL20 (Sulfurihydrogenibium sp. (strain YO3AOP1)).